A 311-amino-acid polypeptide reads, in one-letter code: 4-hydroxy-3-methylbut-2-enyl diphosphate reductase (311 aa).

C12 is a binding site for [4Fe-4S] cluster. Positions 43 and 81 each coordinate (2E)-4-hydroxy-3-methylbut-2-enyl diphosphate. Residues H43 and H81 each coordinate dimethylallyl diphosphate. H43 and H81 together coordinate isopentenyl diphosphate. [4Fe-4S] cluster is bound at residue C103. H131 provides a ligand contact to (2E)-4-hydroxy-3-methylbut-2-enyl diphosphate. A dimethylallyl diphosphate-binding site is contributed by H131. Isopentenyl diphosphate is bound at residue H131. E133 functions as the Proton donor in the catalytic mechanism. T170 lines the (2E)-4-hydroxy-3-methylbut-2-enyl diphosphate pocket. C198 contributes to the [4Fe-4S] cluster binding site. The (2E)-4-hydroxy-3-methylbut-2-enyl diphosphate site is built by S226, N228, and S271. 3 residues coordinate dimethylallyl diphosphate: S226, N228, and S271. Isopentenyl diphosphate is bound by residues S226, N228, and S271.

Belongs to the IspH family. [4Fe-4S] cluster is required as a cofactor.

The catalysed reaction is isopentenyl diphosphate + 2 oxidized [2Fe-2S]-[ferredoxin] + H2O = (2E)-4-hydroxy-3-methylbut-2-enyl diphosphate + 2 reduced [2Fe-2S]-[ferredoxin] + 2 H(+). The enzyme catalyses dimethylallyl diphosphate + 2 oxidized [2Fe-2S]-[ferredoxin] + H2O = (2E)-4-hydroxy-3-methylbut-2-enyl diphosphate + 2 reduced [2Fe-2S]-[ferredoxin] + 2 H(+). It functions in the pathway isoprenoid biosynthesis; dimethylallyl diphosphate biosynthesis; dimethylallyl diphosphate from (2E)-4-hydroxy-3-methylbutenyl diphosphate: step 1/1. It participates in isoprenoid biosynthesis; isopentenyl diphosphate biosynthesis via DXP pathway; isopentenyl diphosphate from 1-deoxy-D-xylulose 5-phosphate: step 6/6. Catalyzes the conversion of 1-hydroxy-2-methyl-2-(E)-butenyl 4-diphosphate (HMBPP) into a mixture of isopentenyl diphosphate (IPP) and dimethylallyl diphosphate (DMAPP). Acts in the terminal step of the DOXP/MEP pathway for isoprenoid precursor biosynthesis. In Brevibacillus brevis (strain 47 / JCM 6285 / NBRC 100599), this protein is 4-hydroxy-3-methylbut-2-enyl diphosphate reductase.